The primary structure comprises 431 residues: Beta-lactamase hydrolase-like protein (431 aa).

Zn(2+)-binding residues include H212, H214, and H286. D309 serves as a coordination point for substrate.

The protein belongs to the metallo-beta-lactamase superfamily. Zn(2+) serves as cofactor.

In terms of biological role, could play a role in cell adherence or biofilm development. The chain is Beta-lactamase hydrolase-like protein from Xylella fastidiosa (strain Temecula1 / ATCC 700964).